Here is a 185-residue protein sequence, read N- to C-terminus: Ribosome-recycling factor (185 aa).

The protein belongs to the RRF family.

It localises to the cytoplasm. Its function is as follows. Responsible for the release of ribosomes from messenger RNA at the termination of protein biosynthesis. May increase the efficiency of translation by recycling ribosomes from one round of translation to another. The sequence is that of Ribosome-recycling factor from Clostridium kluyveri (strain NBRC 12016).